A 296-amino-acid polypeptide reads, in one-letter code: Probable endonuclease 4 (296 aa).

Residues H68, H109, E144, D178, H181, H213, D226, H228, and E258 each coordinate Zn(2+).

Belongs to the AP endonuclease 2 family. The cofactor is Zn(2+).

It catalyses the reaction Endonucleolytic cleavage to 5'-phosphooligonucleotide end-products.. Functionally, endonuclease IV plays a role in DNA repair. It cleaves phosphodiester bonds at apurinic or apyrimidinic (AP) sites, generating a 3'-hydroxyl group and a 5'-terminal sugar phosphate. The polypeptide is Probable endonuclease 4 (Staphylococcus epidermidis (strain ATCC 35984 / DSM 28319 / BCRC 17069 / CCUG 31568 / BM 3577 / RP62A)).